The chain runs to 248 residues: Probable transcriptional regulatory protein RPC_4807 (248 aa).

Residues Met1–Lys21 form a disordered region.

The protein belongs to the TACO1 family.

It is found in the cytoplasm. The protein is Probable transcriptional regulatory protein RPC_4807 of Rhodopseudomonas palustris (strain BisB18).